Reading from the N-terminus, the 381-residue chain is MGPIGAEADENQTVEEMKVEQYGPQTTPRGELVPDPEPELIDSTKLIEVQVVLILAYCSIILLGVIGNSLVIHVVIKFKSMRTVTNFFIANLAVADLLVNTLCLPFTLTYTLMGEWKMGPVLCHLVPYAQGLAVQVSTITLTVIALDRHRCIVYHLESKISKRISFLIIGLAWGISALLASPLAIFREYSLIEIIPDFEIVACTEKWPGEEKSIYGTVYSLSSLLILYVLPLGIISFSYTRIWSKLKNHVSPGAANDHYHQRRQKTTKMLVCVVVVFAVSWLPLHAFQLAVDIDSQVLDLKEYKLIFTVFHIIAMCSTFANPLLYGWMNSNYRKAFLSAFRCEQRLDAIHSEVSVTFKAKKNLEVRKNSGPNDSFTEATNV.

Residues 1–35 (MGPIGAEADENQTVEEMKVEQYGPQTTPRGELVPD) are disordered. Topologically, residues 1-51 (MGPIGAEADENQTVEEMKVEQYGPQTTPRGELVPDPEPELIDSTKLIEVQV) are extracellular. Residue Asn11 is glycosylated (N-linked (GlcNAc...) asparagine). Residues 52 to 72 (VLILAYCSIILLGVIGNSLVI) traverse the membrane as a helical segment. The Cytoplasmic portion of the chain corresponds to 73–86 (HVVIKFKSMRTVTN). A helical membrane pass occupies residues 87 to 107 (FFIANLAVADLLVNTLCLPFT). Residues 108-124 (LTYTLMGEWKMGPVLCH) lie on the Extracellular side of the membrane. An intrachain disulfide couples Cys123 to Cys203. The chain crosses the membrane as a helical span at residues 125–145 (LVPYAQGLAVQVSTITLTVIA). Residues 146–165 (LDRHRCIVYHLESKISKRIS) are Cytoplasmic-facing. Residues 166–186 (FLIIGLAWGISALLASPLAIF) form a helical membrane-spanning segment. Residues 187-216 (REYSLIEIIPDFEIVACTEKWPGEEKSIYG) lie on the Extracellular side of the membrane. The chain crosses the membrane as a helical span at residues 217 to 237 (TVYSLSSLLILYVLPLGIISF). The Cytoplasmic portion of the chain corresponds to 238-268 (SYTRIWSKLKNHVSPGAANDHYHQRRQKTTK). Residues 269–289 (MLVCVVVVFAVSWLPLHAFQL) traverse the membrane as a helical segment. Residues 290-304 (AVDIDSQVLDLKEYK) lie on the Extracellular side of the membrane. Residues 305–325 (LIFTVFHIIAMCSTFANPLLY) form a helical membrane-spanning segment. The Cytoplasmic segment spans residues 326-381 (GWMNSNYRKAFLSAFRCEQRLDAIHSEVSVTFKAKKNLEVRKNSGPNDSFTEATNV). Cys342 is lipidated: S-palmitoyl cysteine.

The protein belongs to the G-protein coupled receptor 1 family. In terms of tissue distribution, high levels in amygdala, corpus callosum, hippocampus and subthalamic nucleus. Also detectable in caudate nucleus, hypothalamus and substantia nigra.

It is found in the cell membrane. Receptor for neuropeptide Y and peptide YY. The rank order of affinity of this receptor for pancreatic polypeptides is PYY &gt; NPY &gt; PYY (3-36) &gt; NPY (2-36) &gt; [Ile-31, Gln-34] PP &gt; [Leu-31, Pro-34] NPY &gt; PP, [Pro-34] PYY and NPY free acid. In Homo sapiens (Human), this protein is Neuropeptide Y receptor type 2 (NPY2R).